A 1342-amino-acid polypeptide reads, in one-letter code: DNA-directed RNA polymerase subunit beta (1342 aa).

N6-acetyllysine is present on residues Lys-1022 and Lys-1200.

The protein belongs to the RNA polymerase beta chain family. As to quaternary structure, the RNAP catalytic core consists of 2 alpha, 1 beta, 1 beta' and 1 omega subunit. When a sigma factor is associated with the core the holoenzyme is formed, which can initiate transcription.

The enzyme catalyses RNA(n) + a ribonucleoside 5'-triphosphate = RNA(n+1) + diphosphate. Functionally, DNA-dependent RNA polymerase catalyzes the transcription of DNA into RNA using the four ribonucleoside triphosphates as substrates. This is DNA-directed RNA polymerase subunit beta from Escherichia coli O139:H28 (strain E24377A / ETEC).